A 216-amino-acid chain; its full sequence is Adenylate kinase (216 aa).

11 to 16 (GSGKGT) is an ATP binding site. The segment at 31–60 (ATGDLFRKAIECGDELGDTVKSYMERGELV) is NMP. AMP is bound by residues Thr32, Arg37, 58–60 (ELV), 86–89 (GFPR), and Gln93. The segment at 127-163 (GRWVCRSCQSPYQSGCAEVTKGKCSRCQGGLYQRPDD) is LID. An ATP-binding site is contributed by Arg128. 4 residues coordinate Zn(2+): Cys131, Cys134, Cys150, and Cys153. Residues Arg160 and Arg171 each coordinate AMP. Ala199 contributes to the ATP binding site.

Belongs to the adenylate kinase family. In terms of assembly, monomer.

The protein resides in the cytoplasm. It carries out the reaction AMP + ATP = 2 ADP. It functions in the pathway purine metabolism; AMP biosynthesis via salvage pathway; AMP from ADP: step 1/1. Functionally, catalyzes the reversible transfer of the terminal phosphate group between ATP and AMP. Plays an important role in cellular energy homeostasis and in adenine nucleotide metabolism. This is Adenylate kinase from Dehalococcoides mccartyi (strain CBDB1).